Consider the following 335-residue polypeptide: Transcriptional adapter 1 (335 aa).

This sequence belongs to the TADA1 family. Component of the STAGA transcription coactivator-HAT complex, at least composed of SUPT3H, GCN5L2, TAF5L, TAF6L, SUPT7L, TADA3L, TAD1L, TAF10, TAF12, TRRAP and TAF9.

It localises to the nucleus. Functionally, probably involved in transcriptional regulation. The sequence is that of Transcriptional adapter 1 (TADA1) from Bos taurus (Bovine).